A 91-amino-acid polypeptide reads, in one-letter code: Acylphosphatase (91 aa).

Residues 6-91 (CMRCYISGRV…WEDYISFDVL (86 aa)) form the Acylphosphatase-like domain. Residues Arg21 and Asn39 contribute to the active site.

The protein belongs to the acylphosphatase family.

The enzyme catalyses an acyl phosphate + H2O = a carboxylate + phosphate + H(+). This chain is Acylphosphatase (acyP), found in Legionella pneumophila (strain Corby).